Reading from the N-terminus, the 700-residue chain is Elongation factor G 1 (700 aa).

In terms of domain architecture, tr-type G spans 8–290 (QNYRNIGISA…AVIEFMPSPI (283 aa)). Residues 17 to 24 (AHIDAGKT), 88 to 92 (DTPGH), and 142 to 145 (NKMD) each bind GTP.

The protein belongs to the TRAFAC class translation factor GTPase superfamily. Classic translation factor GTPase family. EF-G/EF-2 subfamily.

It localises to the cytoplasm. In terms of biological role, catalyzes the GTP-dependent ribosomal translocation step during translation elongation. During this step, the ribosome changes from the pre-translocational (PRE) to the post-translocational (POST) state as the newly formed A-site-bound peptidyl-tRNA and P-site-bound deacylated tRNA move to the P and E sites, respectively. Catalyzes the coordinated movement of the two tRNA molecules, the mRNA and conformational changes in the ribosome. This is Elongation factor G 1 from Polaromonas sp. (strain JS666 / ATCC BAA-500).